Here is a 144-residue protein sequence, read N- to C-terminus: Transcription antitermination protein NusB (144 aa).

It belongs to the NusB family.

In terms of biological role, involved in transcription antitermination. Required for transcription of ribosomal RNA (rRNA) genes. Binds specifically to the boxA antiterminator sequence of the ribosomal RNA (rrn) operons. The sequence is that of Transcription antitermination protein NusB from Haemophilus influenzae (strain PittEE).